The following is a 267-amino-acid chain: Methylglyoxal reductase DkgB (267 aa).

Residue tyrosine 39 is the Proton donor of the active site. Residue histidine 97 coordinates substrate. An NADP(+)-binding site is contributed by 179 to 231 (MTLAYGKALKDEVIARIAVKHNATPVQVILAWAMGEGYSVIPSSTRRENLASN).

Belongs to the aldo/keto reductase family. In terms of assembly, monomer.

It localises to the cytoplasm. It catalyses the reaction hydroxyacetone + NADP(+) = methylglyoxal + NADPH + H(+). Aldo-keto reductase that significantly contributes to cellular methylglyoxal detoxification by catalyzing the NADPH-dependent conversion of methylglyoxal to acetol. The protein is Methylglyoxal reductase DkgB of Salmonella typhi.